A 1611-amino-acid polypeptide reads, in one-letter code: Pentafunctional AROM polypeptide (1611 aa).

The tract at residues 1 to 406 (MSQVSGGKVP…VEERASTVSD (406 aa)) is 3-dehydroquinate synthase. Residues 64–66 (DTN), 97–100 (EESK), 128–130 (GGV), and D133 contribute to the NAD(+) site. R144 serves as a coordination point for 7-phospho-2-dehydro-3-deoxy-D-arabino-heptonate. NAD(+) is bound at residue 153 to 154 (TT). The 7-phospho-2-dehydro-3-deoxy-D-arabino-heptonate site is built by D160 and K166. An NAD(+)-binding site is contributed by K175. N176 serves as a coordination point for 7-phospho-2-dehydro-3-deoxy-D-arabino-heptonate. NAD(+) contacts are provided by residues 193–196 (WLLT) and N204. E208 contacts Zn(2+). 7-phospho-2-dehydro-3-deoxy-D-arabino-heptonate contacts are provided by residues 208-211 (EVIK) and K272. E282 serves as the catalytic Proton acceptor; for 3-dehydroquinate synthase activity. 7-phospho-2-dehydro-3-deoxy-D-arabino-heptonate is bound by residues 286 to 290 (RNLVN) and H293. H293 is a binding site for Zn(2+). The active-site Proton acceptor; for 3-dehydroquinate synthase activity is the H297. 7-phospho-2-dehydro-3-deoxy-D-arabino-heptonate contacts are provided by H309 and K378. Residue H309 participates in Zn(2+) binding. Residues 419 to 882 (VRESVSAPRP…WDVLGGPLNV (464 aa)) are EPSP synthase. C864 serves as the catalytic For EPSP synthase activity. The interval 915-1092 (DASIVLIGMR…VPISPAFFLS (178 aa)) is shikimate kinase. 922–929 (GMRASGKS) is an ATP binding site. Residues 1093-1309 (LTFPRVQDAW…AAPGQMSVRD (217 aa)) form a 3-dehydroquinase region. Catalysis depends on H1212, which acts as the Proton acceptor; for 3-dehydroquinate dehydratase activity. K1240 functions as the Schiff-base intermediate with substrate; for 3-dehydroquinate dehydratase activity in the catalytic mechanism. The interval 1322 to 1611 (KRHFFLFGSP…AAYRAAAASM (290 aa)) is shikimate dehydrogenase.

It in the N-terminal section; belongs to the sugar phosphate cyclases superfamily. Dehydroquinate synthase family. The protein in the 2nd section; belongs to the EPSP synthase family. In the 3rd section; belongs to the shikimate kinase family. This sequence in the 4th section; belongs to the type-I 3-dehydroquinase family. It in the C-terminal section; belongs to the shikimate dehydrogenase family. In terms of assembly, homodimer. Requires Zn(2+) as cofactor.

It is found in the cytoplasm. It carries out the reaction 7-phospho-2-dehydro-3-deoxy-D-arabino-heptonate = 3-dehydroquinate + phosphate. It catalyses the reaction 3-dehydroquinate = 3-dehydroshikimate + H2O. The enzyme catalyses shikimate + NADP(+) = 3-dehydroshikimate + NADPH + H(+). The catalysed reaction is shikimate + ATP = 3-phosphoshikimate + ADP + H(+). It carries out the reaction 3-phosphoshikimate + phosphoenolpyruvate = 5-O-(1-carboxyvinyl)-3-phosphoshikimate + phosphate. The protein operates within metabolic intermediate biosynthesis; chorismate biosynthesis; chorismate from D-erythrose 4-phosphate and phosphoenolpyruvate: step 2/7. Its pathway is metabolic intermediate biosynthesis; chorismate biosynthesis; chorismate from D-erythrose 4-phosphate and phosphoenolpyruvate: step 3/7. It participates in metabolic intermediate biosynthesis; chorismate biosynthesis; chorismate from D-erythrose 4-phosphate and phosphoenolpyruvate: step 4/7. It functions in the pathway metabolic intermediate biosynthesis; chorismate biosynthesis; chorismate from D-erythrose 4-phosphate and phosphoenolpyruvate: step 5/7. The protein operates within metabolic intermediate biosynthesis; chorismate biosynthesis; chorismate from D-erythrose 4-phosphate and phosphoenolpyruvate: step 6/7. Functionally, the AROM polypeptide catalyzes 5 consecutive enzymatic reactions in prechorismate polyaromatic amino acid biosynthesis. This chain is Pentafunctional AROM polypeptide, found in Malassezia globosa (strain ATCC MYA-4612 / CBS 7966) (Dandruff-associated fungus).